We begin with the raw amino-acid sequence, 103 residues long: Co-chaperonin GroES (103 aa).

It belongs to the GroES chaperonin family. As to quaternary structure, heptamer of 7 subunits arranged in a ring. Interacts with the chaperonin GroEL.

Its subcellular location is the cytoplasm. Together with the chaperonin GroEL, plays an essential role in assisting protein folding. The GroEL-GroES system forms a nano-cage that allows encapsulation of the non-native substrate proteins and provides a physical environment optimized to promote and accelerate protein folding. GroES binds to the apical surface of the GroEL ring, thereby capping the opening of the GroEL channel. In Synechococcus elongatus (strain ATCC 33912 / PCC 7942 / FACHB-805) (Anacystis nidulans R2), this protein is Co-chaperonin GroES.